We begin with the raw amino-acid sequence, 565 residues long: Dihydroxy-acid dehydratase (565 aa).

Residue Cys-53 coordinates [2Fe-2S] cluster. Asp-85 is a binding site for Mg(2+). [2Fe-2S] cluster is bound at residue Cys-126. Asp-127 and Lys-128 together coordinate Mg(2+). N6-carboxylysine is present on Lys-128. Cys-198 is a [2Fe-2S] cluster binding site. Glu-450 contacts Mg(2+). Residue Ser-476 is the Proton acceptor of the active site.

The protein belongs to the IlvD/Edd family. As to quaternary structure, homodimer. The cofactor is [2Fe-2S] cluster. It depends on Mg(2+) as a cofactor.

The catalysed reaction is (2R)-2,3-dihydroxy-3-methylbutanoate = 3-methyl-2-oxobutanoate + H2O. It carries out the reaction (2R,3R)-2,3-dihydroxy-3-methylpentanoate = (S)-3-methyl-2-oxopentanoate + H2O. Its pathway is amino-acid biosynthesis; L-isoleucine biosynthesis; L-isoleucine from 2-oxobutanoate: step 3/4. It functions in the pathway amino-acid biosynthesis; L-valine biosynthesis; L-valine from pyruvate: step 3/4. Functionally, functions in the biosynthesis of branched-chain amino acids. Catalyzes the dehydration of (2R,3R)-2,3-dihydroxy-3-methylpentanoate (2,3-dihydroxy-3-methylvalerate) into 2-oxo-3-methylpentanoate (2-oxo-3-methylvalerate) and of (2R)-2,3-dihydroxy-3-methylbutanoate (2,3-dihydroxyisovalerate) into 2-oxo-3-methylbutanoate (2-oxoisovalerate), the penultimate precursor to L-isoleucine and L-valine, respectively. The chain is Dihydroxy-acid dehydratase from Synechococcus sp. (strain JA-2-3B'a(2-13)) (Cyanobacteria bacterium Yellowstone B-Prime).